The primary structure comprises 273 residues: Phosphatidylglycerol--prolipoprotein diacylglyceryl transferase (273 aa).

7 helical membrane-spanning segments follow: residues 21 to 41 (VSIR…LWLA), 60 to 80 (LLFA…VIFY), 95 to 115 (VWTG…AMFW), 124 to 144 (FFGV…MGRM), 176 to 196 (SQLY…NWFI), 203 to 223 (GSVS…VEFV), and 237 to 257 (ISMG…MMVW). R143 is an a 1,2-diacyl-sn-glycero-3-phospho-(1'-sn-glycerol) binding site.

It belongs to the Lgt family.

It is found in the cell inner membrane. It carries out the reaction L-cysteinyl-[prolipoprotein] + a 1,2-diacyl-sn-glycero-3-phospho-(1'-sn-glycerol) = an S-1,2-diacyl-sn-glyceryl-L-cysteinyl-[prolipoprotein] + sn-glycerol 1-phosphate + H(+). Its pathway is protein modification; lipoprotein biosynthesis (diacylglyceryl transfer). Catalyzes the transfer of the diacylglyceryl group from phosphatidylglycerol to the sulfhydryl group of the N-terminal cysteine of a prolipoprotein, the first step in the formation of mature lipoproteins. This Vibrio parahaemolyticus serotype O3:K6 (strain RIMD 2210633) protein is Phosphatidylglycerol--prolipoprotein diacylglyceryl transferase.